We begin with the raw amino-acid sequence, 434 residues long: D-amino acid dehydrogenase (434 aa).

3-17 (VLVLGSGVIGTTSAW) serves as a coordination point for FAD.

Belongs to the DadA oxidoreductase family. FAD is required as a cofactor.

The enzyme catalyses a D-alpha-amino acid + A + H2O = a 2-oxocarboxylate + AH2 + NH4(+). It functions in the pathway amino-acid degradation; D-alanine degradation; NH(3) and pyruvate from D-alanine: step 1/1. In terms of biological role, oxidative deamination of D-amino acids. The protein is D-amino acid dehydrogenase of Stenotrophomonas maltophilia (strain R551-3).